A 161-amino-acid polypeptide reads, in one-letter code: Phosphopantetheine adenylyltransferase (161 aa).

Serine 9 serves as a coordination point for substrate. ATP is bound by residues 9–10 (SF) and histidine 17. Substrate contacts are provided by lysine 41, leucine 73, and arginine 87. Residues 88 to 90 (GIR), glutamate 98, and 123 to 129 (TGFISST) contribute to the ATP site.

This sequence belongs to the bacterial CoaD family. Homohexamer. Mg(2+) serves as cofactor.

It localises to the cytoplasm. It carries out the reaction (R)-4'-phosphopantetheine + ATP + H(+) = 3'-dephospho-CoA + diphosphate. Its pathway is cofactor biosynthesis; coenzyme A biosynthesis; CoA from (R)-pantothenate: step 4/5. Its function is as follows. Reversibly transfers an adenylyl group from ATP to 4'-phosphopantetheine, yielding dephospho-CoA (dPCoA) and pyrophosphate. The chain is Phosphopantetheine adenylyltransferase from Psychromonas ingrahamii (strain DSM 17664 / CCUG 51855 / 37).